The chain runs to 366 residues: Chorismate synthase (366 aa).

R48 and R54 together coordinate NADP(+). FMN-binding positions include 132 to 134 (RSS), 244 to 245 (NA), G289, 304 to 308 (KPTSS), and R330.

Belongs to the chorismate synthase family. As to quaternary structure, homotetramer. It depends on FMNH2 as a cofactor.

It catalyses the reaction 5-O-(1-carboxyvinyl)-3-phosphoshikimate = chorismate + phosphate. It participates in metabolic intermediate biosynthesis; chorismate biosynthesis; chorismate from D-erythrose 4-phosphate and phosphoenolpyruvate: step 7/7. Catalyzes the anti-1,4-elimination of the C-3 phosphate and the C-6 proR hydrogen from 5-enolpyruvylshikimate-3-phosphate (EPSP) to yield chorismate, which is the branch point compound that serves as the starting substrate for the three terminal pathways of aromatic amino acid biosynthesis. This reaction introduces a second double bond into the aromatic ring system. This Methylobacterium radiotolerans (strain ATCC 27329 / DSM 1819 / JCM 2831 / NBRC 15690 / NCIMB 10815 / 0-1) protein is Chorismate synthase.